We begin with the raw amino-acid sequence, 66 residues long: Large ribosomal subunit protein bL31 (66 aa).

4 residues coordinate Zn(2+): cysteine 16, cysteine 18, cysteine 36, and cysteine 39.

Belongs to the bacterial ribosomal protein bL31 family. Type A subfamily. Part of the 50S ribosomal subunit. Zn(2+) is required as a cofactor.

Functionally, binds the 23S rRNA. The sequence is that of Large ribosomal subunit protein bL31 from Nitratiruptor sp. (strain SB155-2).